A 204-amino-acid polypeptide reads, in one-letter code: AFG2-interacting ribosome maturation factor (204 aa).

Part of the 55LCC heterohexameric ATPase complex. Does not associate with pre-60S ribosomal particles.

Its subcellular location is the nucleus. It localises to the cytoplasm. In terms of biological role, part of the 55LCC heterohexameric ATPase complex which is chromatin-associated and promotes replisome proteostasis to maintain replication fork progression and genome stability. Required for replication fork progression, sister chromatid cohesion, and chromosome stability. The ATPase activity is specifically enhanced by replication fork DNA and is coupled to cysteine protease-dependent cleavage of replisome substrates in response to replication fork damage. Uses ATPase activity to process replisome substrates in S-phase, facilitating their proteolytic turnover from chromatin to ensure DNA replication and mitotic fidelity. Involved in the cytoplasmic maturation steps of pre-60S ribosomal particles by promoting the release of shuttling protein RSL24D1/RLP24 from the pre-ribosomal particles. The polypeptide is AFG2-interacting ribosome maturation factor (airim) (Xenopus tropicalis (Western clawed frog)).